The following is a 281-amino-acid chain: ATP phosphoribosyltransferase (281 aa).

It belongs to the ATP phosphoribosyltransferase family. Long subfamily. Mg(2+) serves as cofactor.

It is found in the cytoplasm. It carries out the reaction 1-(5-phospho-beta-D-ribosyl)-ATP + diphosphate = 5-phospho-alpha-D-ribose 1-diphosphate + ATP. Its pathway is amino-acid biosynthesis; L-histidine biosynthesis; L-histidine from 5-phospho-alpha-D-ribose 1-diphosphate: step 1/9. Feedback inhibited by histidine. Its function is as follows. Catalyzes the condensation of ATP and 5-phosphoribose 1-diphosphate to form N'-(5'-phosphoribosyl)-ATP (PR-ATP). Has a crucial role in the pathway because the rate of histidine biosynthesis seems to be controlled primarily by regulation of HisG enzymatic activity. The protein is ATP phosphoribosyltransferase of Corynebacterium jeikeium (strain K411).